The following is a 371-amino-acid chain: 2-oxoadipate dioxygenase/decarboxylase, chloroplastic (371 aa).

The transit peptide at methionine 1–serine 50 directs the protein to the chloroplast. The 2-oxoadipate site is built by histidine 113 and arginine 117. Residue histidine 113 participates in Fe(2+) binding. Histidine 250 contributes to the Fe(2+) binding site. Residues glutamine 296 and tyrosine 320 each contribute to the 2-oxoadipate site. Position 322 (glutamate 322) interacts with Fe(2+).

This sequence belongs to the 2-oxoadipate dioxygenase/decarboxylase family. Requires Fe(2+) as cofactor.

It is found in the plastid. It localises to the chloroplast. It carries out the reaction 2-oxoadipate + O2 = (R)-2-hydroxyglutarate + CO2. It functions in the pathway amino-acid degradation. Its function is as follows. Catalyzes the decarboxylation and hydroxylation of 2-oxoadipate (2OA) to form D-2-hydroxyglutarate (D-2-HGA). Is involved in a D-lysine catabolic pathway. The chain is 2-oxoadipate dioxygenase/decarboxylase, chloroplastic from Arabidopsis thaliana (Mouse-ear cress).